Consider the following 524-residue polypeptide: Serine/threonine-protein kinase PAK 2 (524 aa).

Residues 1–81 (MSDNGELEDK…PEISPPSDFE (81 aa)) are disordered. The residue at position 2 (serine 2) is an N-acetylserine. Residues serine 2, serine 20, serine 55, and serine 58 each carry the phosphoserine modification. The residue at position 60 (threonine 60) is a Phosphothreonine. Lysine 62 is subject to N6-acetyllysine. Phosphoserine is present on serine 64. The span at 67-81 (KEKERPEISPPSDFE) shows a compositional bias: basic and acidic residues. The GTPase-binding stretch occupies residues 69–112 (KERPEISPPSDFEHTIHVGFDAVTGEFTGMPEQWARLLQTSNIT). The interval 69–137 (KERPEISPPS…KFYDSNTVKQ (69 aa)) is autoregulatory region. The region spanning 74–87 (ISPPSDFEHTIHVG) is the CRIB domain. The linker stretch occupies residues 88–248 (FDAVTGEFTG…IVSIGDPKKK (161 aa)). Lysine 128 bears the N6-acetyllysine mark. Threonine 134 carries the phosphothreonine modification. A Phosphotyrosine modification is found at tyrosine 139. Residue serine 141 is modified to Phosphoserine. The residue at position 143 (threonine 143) is a Phosphothreonine. Serine 152 is modified (phosphoserine). A phosphothreonine mark is found at threonine 159 and threonine 169. The segment covering 169–178 (TEEDDDDEEA) has biased composition (acidic residues). A disordered region spans residues 169–188 (TEEDDDDEEAAPPVIAPRPD). A Phosphoserine modification is found at serine 197. The interval 204 to 228 (APVGDSHVDSGAKSSDKQKKKTKMT) is disordered. Positions 209 to 228 (SHVDSGAKSSDKQKKKTKMT) are enriched in basic and acidic residues. Residues 245-251 (PKKKYTR) carry the Nuclear localization signal motif. One can recognise a Protein kinase domain in the interval 249-500 (YTRYEKIGQG…AKELLQHPFL (252 aa)). Residues 255-263 (IGQGASGTV) and lysine 278 each bind ATP. Aspartate 368 serves as the catalytic Proton acceptor. Threonine 402 carries the phosphothreonine; by autocatalysis modification.

In terms of assembly, interacts tightly with GTP-bound but not GDP-bound CDC42/p21 and RAC1. Interacts with SH3MD4. Interacts with SCRIB. Interacts with ARHGEF7 and GIT1. PAK-2p34 interacts with ARHGAP10. Interacts with RAC1. Post-translationally, full-length PAK2 is autophosphorylated when activated by CDC42/p21. Following cleavage, both peptides, PAK-2p27 and PAK-2p34, become highly autophosphorylated. Autophosphorylation of PAK-2p27 can occur in the absence of any effectors and is dependent on phosphorylation of Thr-402, because PAK-2p27 is acting as an exogenous substrate. In terms of processing, during apoptosis proteolytically cleaved by caspase-3 or caspase-3-like proteases to yield active PAK-2p34. Ubiquitinated, leading to its proteasomal degradation.

The protein resides in the cytoplasm. It localises to the nucleus. Its subcellular location is the perinuclear region. It is found in the membrane. It catalyses the reaction L-seryl-[protein] + ATP = O-phospho-L-seryl-[protein] + ADP + H(+). It carries out the reaction L-threonyl-[protein] + ATP = O-phospho-L-threonyl-[protein] + ADP + H(+). With respect to regulation, activated by binding small G proteins. Binding of GTP-bound CDC42 or RAC1 to the autoregulatory region releases monomers from the autoinhibited dimer, enables phosphorylation of Thr-402 and allows the kinase domain to adopt an active structure. Following caspase cleavage, autophosphorylated PAK-2p34 is constitutively active. Serine/threonine protein kinase that plays a role in a variety of different signaling pathways including cytoskeleton regulation, cell motility, cell cycle progression, apoptosis or proliferation. Acts as a downstream effector of the small GTPases CDC42 and RAC1. Activation by the binding of active CDC42 and RAC1 results in a conformational change and a subsequent autophosphorylation on several serine and/or threonine residues. Full-length PAK2 stimulates cell survival and cell growth. Phosphorylates MAPK4 and MAPK6 and activates the downstream target MAPKAPK5, a regulator of F-actin polymerization and cell migration. Phosphorylates JUN and plays an important role in EGF-induced cell proliferation. Phosphorylates many other substrates including histone H4 to promote assembly of H3.3 and H4 into nucleosomes, BAD, ribosomal protein S6, or MBP. Phosphorylates CASP7, thereby preventing its activity. Additionally, associates with ARHGEF7 and GIT1 to perform kinase-independent functions such as spindle orientation control during mitosis. On the other hand, apoptotic stimuli such as DNA damage lead to caspase-mediated cleavage of PAK2, generating PAK-2p34, an active p34 fragment that translocates to the nucleus and promotes cellular apoptosis involving the JNK signaling pathway. Caspase-activated PAK2 phosphorylates MKNK1 and reduces cellular translation. This Oryctolagus cuniculus (Rabbit) protein is Serine/threonine-protein kinase PAK 2 (PAK2).